A 142-amino-acid polypeptide reads, in one-letter code: Augurin-A (142 aa).

The signal sequence occupies residues 1 to 28 (MLSEKFHLRLLTLLTLLTALSLTDVASE). 2 consecutive propeptides follow at residues 29–66 (SKLEKLLMKRVDRDVKPAAAVAVSPSKAKEFLTSLKRP) and 127–142 (GAASYRHGANVNYDYY).

Belongs to the augurin family.

It localises to the secreted. Its subcellular location is the cytoplasm. The protein resides in the apical cell membrane. In terms of biological role, probable hormone. Required for the proper formation of the central nervous system by attenuating cell proliferation during development. This chain is Augurin-A, found in Danio rerio (Zebrafish).